The sequence spans 145 residues: D-aminoacyl-tRNA deacylase (145 aa).

The Gly-cisPro motif, important for rejection of L-amino acids motif lies at 137–138; sequence GP.

This sequence belongs to the DTD family. In terms of assembly, homodimer.

It is found in the cytoplasm. It carries out the reaction glycyl-tRNA(Ala) + H2O = tRNA(Ala) + glycine + H(+). The enzyme catalyses a D-aminoacyl-tRNA + H2O = a tRNA + a D-alpha-amino acid + H(+). Functionally, an aminoacyl-tRNA editing enzyme that deacylates mischarged D-aminoacyl-tRNAs. Also deacylates mischarged glycyl-tRNA(Ala), protecting cells against glycine mischarging by AlaRS. Acts via tRNA-based rather than protein-based catalysis; rejects L-amino acids rather than detecting D-amino acids in the active site. By recycling D-aminoacyl-tRNA to D-amino acids and free tRNA molecules, this enzyme counteracts the toxicity associated with the formation of D-aminoacyl-tRNA entities in vivo and helps enforce protein L-homochirality. The chain is D-aminoacyl-tRNA deacylase from Pseudomonas fluorescens (strain ATCC BAA-477 / NRRL B-23932 / Pf-5).